The sequence spans 202 residues: Holliday junction branch migration complex subunit RuvA (202 aa).

Residues 1–65 (MIAYVEGRLA…EDALELYGFA (65 aa)) form a domain I region. The interval 66–144 (TWDERQTFIV…VEDLPAAAPL (79 aa)) is domain II. Residues 145–155 (VTGGAPGGVFR) are flexible linker. Residues 155–202 (RDALAGLANLGYGEEEASHVLKEVLHGEPDLDVGGALRAALRALARGR) form a domain III region.

The protein belongs to the RuvA family. In terms of assembly, homotetramer. Forms an RuvA(8)-RuvB(12)-Holliday junction (HJ) complex. HJ DNA is sandwiched between 2 RuvA tetramers; dsDNA enters through RuvA and exits via RuvB. An RuvB hexamer assembles on each DNA strand where it exits the tetramer. Each RuvB hexamer is contacted by two RuvA subunits (via domain III) on 2 adjacent RuvB subunits; this complex drives branch migration. In the full resolvosome a probable DNA-RuvA(4)-RuvB(12)-RuvC(2) complex forms which resolves the HJ.

The protein resides in the cytoplasm. Functionally, the RuvA-RuvB-RuvC complex processes Holliday junction (HJ) DNA during genetic recombination and DNA repair, while the RuvA-RuvB complex plays an important role in the rescue of blocked DNA replication forks via replication fork reversal (RFR). RuvA specifically binds to HJ cruciform DNA, conferring on it an open structure. The RuvB hexamer acts as an ATP-dependent pump, pulling dsDNA into and through the RuvAB complex. HJ branch migration allows RuvC to scan DNA until it finds its consensus sequence, where it cleaves and resolves the cruciform DNA. This chain is Holliday junction branch migration complex subunit RuvA, found in Nitratidesulfovibrio vulgaris (strain DP4) (Desulfovibrio vulgaris).